A 332-amino-acid chain; its full sequence is Ketol-acid reductoisomerase (NADP(+)) (332 aa).

Residues 4–184 (ARMYYDEDAD…GGTRAGILET (181 aa)) enclose the KARI N-terminal Rossmann domain. Residues 27 to 30 (YGSQ), S53, S55, and 85 to 88 (DEVQ) each bind NADP(+). Residue H110 is part of the active site. Position 136 (G136) interacts with NADP(+). The KARI C-terminal knotted domain maps to 185 to 330 (TFREEAETDL…ADLRKMMSWL (146 aa)). 4 residues coordinate Mg(2+): D193, E197, E229, and E233. Position 254 (S254) interacts with substrate.

This sequence belongs to the ketol-acid reductoisomerase family. Mg(2+) is required as a cofactor.

It catalyses the reaction (2R)-2,3-dihydroxy-3-methylbutanoate + NADP(+) = (2S)-2-acetolactate + NADPH + H(+). The enzyme catalyses (2R,3R)-2,3-dihydroxy-3-methylpentanoate + NADP(+) = (S)-2-ethyl-2-hydroxy-3-oxobutanoate + NADPH + H(+). The protein operates within amino-acid biosynthesis; L-isoleucine biosynthesis; L-isoleucine from 2-oxobutanoate: step 2/4. Its pathway is amino-acid biosynthesis; L-valine biosynthesis; L-valine from pyruvate: step 2/4. Involved in the biosynthesis of branched-chain amino acids (BCAA). Catalyzes an alkyl-migration followed by a ketol-acid reduction of (S)-2-acetolactate (S2AL) to yield (R)-2,3-dihydroxy-isovalerate. In the isomerase reaction, S2AL is rearranged via a Mg-dependent methyl migration to produce 3-hydroxy-3-methyl-2-ketobutyrate (HMKB). In the reductase reaction, this 2-ketoacid undergoes a metal-dependent reduction by NADPH to yield (R)-2,3-dihydroxy-isovalerate. The protein is Ketol-acid reductoisomerase (NADP(+)) of Gloeobacter violaceus (strain ATCC 29082 / PCC 7421).